We begin with the raw amino-acid sequence, 595 residues long: Aspartate--tRNA ligase (595 aa).

Residue Glu180 coordinates L-aspartate. Positions Gln204–Lys207 are aspartate. L-aspartate is bound at residue Arg226. Residues Arg226 to Glu228 and Gln235 contribute to the ATP site. L-aspartate is bound at residue His454. Glu488 contributes to the ATP binding site. Arg495 is an L-aspartate binding site. Gly540–Arg543 is a binding site for ATP.

Belongs to the class-II aminoacyl-tRNA synthetase family. Type 1 subfamily. Homodimer.

It localises to the cytoplasm. The catalysed reaction is tRNA(Asp) + L-aspartate + ATP = L-aspartyl-tRNA(Asp) + AMP + diphosphate. In terms of biological role, catalyzes the attachment of L-aspartate to tRNA(Asp) in a two-step reaction: L-aspartate is first activated by ATP to form Asp-AMP and then transferred to the acceptor end of tRNA(Asp). The chain is Aspartate--tRNA ligase from Clostridium acetobutylicum (strain ATCC 824 / DSM 792 / JCM 1419 / IAM 19013 / LMG 5710 / NBRC 13948 / NRRL B-527 / VKM B-1787 / 2291 / W).